Consider the following 515-residue polypeptide: Maturase K (515 aa).

It belongs to the intron maturase 2 family. MatK subfamily.

The protein localises to the plastid. It localises to the chloroplast. In terms of biological role, usually encoded in the trnK tRNA gene intron. Probably assists in splicing its own and other chloroplast group II introns. This chain is Maturase K, found in Pinus uncinata (Mountain pine).